The following is a 78-amino-acid chain: Acyl carrier protein BQ2027_MB0103 (78 aa).

One can recognise a Carrier domain in the interval 1–78 (MRDRILAAVC…ELEAVCTEFG (78 aa)). Ser35 bears the O-(pantetheine 4'-phosphoryl)serine mark.

This sequence belongs to the acyl carrier protein (ACP) family. The cofactor is pantetheine 4'-phosphate.

It participates in lipid metabolism; fatty acid metabolism. In terms of biological role, acyl-carrier protein (ACP) involved in the biosynthesis of a unique class of isonitrile lipopeptides (INLPs) that seem to play a role in metal acquisition. Is the dedicated ACP for the loading of activated acyl groups catalyzed by FadD10. This chain is Acyl carrier protein BQ2027_MB0103, found in Mycobacterium bovis (strain ATCC BAA-935 / AF2122/97).